Here is a 416-residue protein sequence, read N- to C-terminus: Adenylosuccinate synthetase (416 aa).

Residues 12–18 (GDEGKGK) and 40–42 (GHT) contribute to the GTP site. D13 (proton acceptor) is an active-site residue. The Mg(2+) site is built by D13 and G40. IMP-binding positions include 13-16 (DEGK), 38-41 (NAGH), T125, R139, Q220, T235, and R299. The active-site Proton donor is H41. 295–301 (TTTGRPR) provides a ligand contact to substrate. Residues R301, 327-329 (KLD), and 405-407 (STS) each bind GTP.

It belongs to the adenylosuccinate synthetase family. Homodimer. The cofactor is Mg(2+).

The protein resides in the cytoplasm. The enzyme catalyses IMP + L-aspartate + GTP = N(6)-(1,2-dicarboxyethyl)-AMP + GDP + phosphate + 2 H(+). The protein operates within purine metabolism; AMP biosynthesis via de novo pathway; AMP from IMP: step 1/2. In terms of biological role, plays an important role in the de novo pathway of purine nucleotide biosynthesis. Catalyzes the first committed step in the biosynthesis of AMP from IMP. This chain is Adenylosuccinate synthetase, found in Nitratiruptor sp. (strain SB155-2).